A 535-amino-acid polypeptide reads, in one-letter code: MELSPRSPPEMLESDCPSPLELKSAPSKKMWIKLRSLLRYMVKQLENGEVNIEELKKNLEYTASLLEAVYIDETRQILDTEDELRELRSDAVPSEVRDWLASTFTQQTRAKGRRAEEKPKFRSIVHAVQAGIFVERMFRRTYTAVGPTYSTAVHNCLKNLDLWCFDVFSLNRAADDHALRTIVFELLTRHSLISRFKIPTVFLMSFLEALETGYGKYKNPYHNQIHAADVTQTVHCFLLRTGMVHCLSEIEVLAIIFAAAIHDYEHTGTTNSFHIQTKSECAILYNDRSVLENHHISSVFRMMQDDEMNIFINLTKDEFVELRALVIEMVLATDMSCHFQQVKSMKTALQQLERIDKSKALSLLLHAADISHPTKQWSVHSRWTKALMEEFFRQGDKEAELGLPFSPLCDRTSTLVAQSQIGFIDFIVEPTFSVLTDVAEKSVQPLADDDSKSKSQPSFQWRQPSLDVDVGDPNPDVISFRSTWTKYIQENKQKWKERAASGITNQMSIDELSPCEEEAPPSPAEDEHNQNGNLD.

The segment at 1–21 (MELSPRSPPEMLESDCPSPLE) is disordered. Phosphoserine is present on residues Ser-7 and Ser-14. Calmodulin-binding stretches follow at residues 26–46 (PSKK…KQLE) and 117–140 (EKPK…MFRR). The PDEase domain occupies 145–502 (VGPTYSTAVH…QKWKERAASG (358 aa)). His-222 acts as the Proton donor in catalysis. Zn(2+) contacts are provided by His-226, His-262, Asp-263, and Asp-369. A Mg(2+)-binding site is contributed by Asp-263. Disordered stretches follow at residues 445-474 (PLAD…GDPN) and 495-535 (WKER…GNLD). Residues 454–463 (KSQPSFQWRQ) are compositionally biased toward polar residues. Residues Ser-465 and Ser-513 each carry the phosphoserine modification.

This sequence belongs to the cyclic nucleotide phosphodiesterase family. PDE1 subfamily. As to quaternary structure, homodimer. Zn(2+) is required as a cofactor. Requires Mg(2+) as cofactor.

The protein resides in the cytoplasm. It is found in the cytosol. It catalyses the reaction a nucleoside 3',5'-cyclic phosphate + H2O = a nucleoside 5'-phosphate + H(+). It carries out the reaction 3',5'-cyclic GMP + H2O = GMP + H(+). The catalysed reaction is 3',5'-cyclic AMP + H2O = AMP + H(+). Type I PDE are activated by the binding of calmodulin in the presence of Ca(2+). In terms of biological role, cyclic nucleotide phosphodiesterase with a dual specificity for the second messengers cAMP and cGMP, which are key regulators of many important physiological processes. Has a preference for cGMP as a substrate. The chain is Dual specificity calcium/calmodulin-dependent 3',5'-cyclic nucleotide phosphodiesterase 1B from Cricetulus griseus (Chinese hamster).